The following is a 681-amino-acid chain: Cobalamin-dependent radical SAM methyltransferase TokK (681 aa).

A B12-binding domain is found at 1-144 (MSAELASRGR…ATRLSDHPDY (144 aa)). Asn18, Ser72, Tyr74, Val75, His103, Gly126, and Glu127 together coordinate cob(II)alamin. Residues 192-417 (RGLRFYALWE…RMYVERPGTP (226 aa)) form the Radical SAM core domain. Residues Cys206 and Cys210 each coordinate [4Fe-4S] cluster. Phe212 contributes to the 5'-deoxyadenosine binding site. Residue Cys213 participates in [4Fe-4S] cluster binding. 2 residues coordinate cob(II)alamin: Asp214 and Cys249. 5'-deoxyadenosine contacts are provided by Gln312, Glu349, and Gly384.

Belongs to the methyltransferase superfamily. [4Fe-4S] cluster is required as a cofactor. Requires cob(II)alamin as cofactor.

The protein operates within antibiotic biosynthesis. Its function is as follows. Methyltransferase involved in the biosynthesis of the beta-lactam carbapenem antibiotic asparenomycin. Catalyzes three consecutive S-adenosyl-L-methionine-dependent methylations to build out the C6-isopropyl side chain in a stereocontrolled manner. The polypeptide is Cobalamin-dependent radical SAM methyltransferase TokK (Streptomyces tokunonensis).